The following is a 428-amino-acid chain: Cyclic AMP-responsive element-binding protein 3-like protein 3-A (428 aa).

Residues 1-286 (MENYSDQGGD…VMNGSNKPVQ (286 aa)) lie on the Cytoplasmic side of the membrane. Positions 67–83 (VSGSPVWSPSPSDSGIS) are enriched in low complexity. The segment at 67–104 (VSGSPVWSPSPSDSGISEDPHSDHIDSPPPNASPPMEP) is disordered. The span at 93 to 103 (SPPPNASPPME) shows a compositional bias: pro residues. The region spanning 210–273 (ILKKIRRKIR…ISLMEQLRRL (64 aa)) is the bZIP domain. The segment at 212–241 (KKIRRKIRNKQSAQESRKKKKEYIDGLESR) is basic motif. A leucine-zipper region spans residues 252–273 (LQRKVFQLEKCNISLMEQLRRL). The chain crosses the membrane as a helical; Signal-anchor for type II membrane protein span at residues 287 to 303 (AGTCVLVLLLSFTLILL). Topologically, residues 304–428 (PNLKPFTDTK…SRRSPHADDM (125 aa)) are lumenal. Residues 381-428 (TEYDPESHNHSFDQHDEHHHGDPITGHVATVTLNPRRGSRRSPHADDM) form a disordered region. The span at 385–402 (PESHNHSFDQHDEHHHGD) shows a compositional bias: basic and acidic residues. N-linked (GlcNAc...) asparagine glycosylation is present at Asn-389.

The protein belongs to the bZIP family. ATF subfamily. Binds DNA as a dimer. Post-translationally, controlled by regulated intramembrane proteolysis (RIP). A fragment containing the cytoplasmic transcription factor domain is released by proteolysis. The cleavage seems to be performed sequentially by site-1 and site-2 proteases.

It is found in the endoplasmic reticulum membrane. Its subcellular location is the nucleus. Its function is as follows. Transcriptional activator. Binds the cAMP response element (CRE). Activates transcription through box-B element and CRE. Seems to function synergistically with atf6. Regulates FGF21 transcription. In Danio rerio (Zebrafish), this protein is Cyclic AMP-responsive element-binding protein 3-like protein 3-A (creb3l3a).